A 102-amino-acid polypeptide reads, in one-letter code: NADH-quinone oxidoreductase subunit K (102 aa).

A run of 3 helical transmembrane segments spans residues 6-26 (LIGM…GVLA), 30-50 (ILFQ…AFVA), and 63-83 (MLIL…ALLL).

This sequence belongs to the complex I subunit 4L family. In terms of assembly, NDH-1 is composed of 14 different subunits. Subunits NuoA, H, J, K, L, M, N constitute the membrane sector of the complex.

The protein localises to the cell inner membrane. The catalysed reaction is a quinone + NADH + 5 H(+)(in) = a quinol + NAD(+) + 4 H(+)(out). Its function is as follows. NDH-1 shuttles electrons from NADH, via FMN and iron-sulfur (Fe-S) centers, to quinones in the respiratory chain. The immediate electron acceptor for the enzyme in this species is believed to be ubiquinone. Couples the redox reaction to proton translocation (for every two electrons transferred, four hydrogen ions are translocated across the cytoplasmic membrane), and thus conserves the redox energy in a proton gradient. The polypeptide is NADH-quinone oxidoreductase subunit K (Rhodopseudomonas palustris (strain HaA2)).